Here is a 256-residue protein sequence, read N- to C-terminus: L-rhamnose 1-dehydrogenase (NAD(P)(+)) (256 aa).

8 residues coordinate NADP(+): Gly-12, Ser-14, Arg-15, Ile-17, Ser-37, Asp-66, Ala-67, and Asn-93. Ser-146 acts as the Proton donor in catalysis. Beta-L-rhamnose contacts are provided by Ser-146, Ser-148, Gln-156, and Tyr-159. Positions 159 and 163 each coordinate NADP(+). Catalysis depends on Tyr-159, which acts as the Proton acceptor. Lys-163 serves as the catalytic Lowers pKa of active site Tyr. Thr-191 provides a ligand contact to beta-L-rhamnose. Residue Ile-192 participates in NADP(+) binding. Asn-197 provides a ligand contact to beta-L-rhamnose.

This sequence belongs to the short-chain dehydrogenases/reductases (SDR) family.

It catalyses the reaction L-rhamnofuranose + NAD(+) = L-rhamnono-1,4-lactone + NADH + H(+). It carries out the reaction L-rhamnofuranose + NADP(+) = L-rhamnono-1,4-lactone + NADPH + H(+). It participates in carbohydrate degradation; L-rhamnose degradation. Functionally, NAD(P)-dependent dehydrogenase that catalyzes the oxidation of L-rhamnose to L-rhamnono-1,4-lactone. Also shows high activity with L-lyxose and low activity with L-mannose and L-fucose. Can utilize either NAD(+) or NADP(+), with a strong preference for NADP(+). Catalyzes the first step in an alternative pathway for rhamnose utilization that does not involve phosphorylated intermediates. The protein is L-rhamnose 1-dehydrogenase (NAD(P)(+)) of Azotobacter vinelandii (strain DJ / ATCC BAA-1303).